The primary structure comprises 561 residues: MADHNPDSDSTPRTLLRRVLDTADPRTPRRPRSARAGARRALLETASPRKLSGQTRTIARGRSHGARSVGRSAHIQASGHLEEQTPRTLLKNILLTAPESSILMPESVVKPVPAPQAVQPSRQESSCGSLELQLPELEPPTTLAPGLLAPGRRKQRLRLSVFQQGVDQGLSLSQEPQGNADASSLTRSLNLTFATPLQPQSVQRPGLARRPPARRAVDVGAFLRDLRDTSLAPPNIVLEDTQPFSQPMVGSPNVYHSLPCTPHTGAEDAEQAAGRKTQSSGPGLQKNSPGKPAQFLAGEAEEVNAFALGFLSTSSGVSGEDEVEPLHDGVEEAEKKMEEEGVSVSEMEATGAQGPSRVEEAEGHTEVTEAEGSQGTAEADGPGASSGDEDASGRAASPESASSTPESLQARRHHQFLEPAPAPGAAVLSSEPAEPLLVRHPPRPRTTGPRPRQDPHKAGLSHYVKLFSFYAKMPMERKALEMVEKCLDKYFQHLCDDLEVFAAHAGRKTVKPEDLELLMRRQGLVTDQVSLHVLVERHLPLEYRQLLIPCAYSGNSVFPAQ.

A disordered region spans residues 1-83; it reads MADHNPDSDS…HIQASGHLEE (83 aa). The segment covering 18–27 has biased composition (basic and acidic residues); it reads RVLDTADPRT. Over residues 34 to 46 the composition is skewed to low complexity; sequence ARAGARRALLETA. Phosphoserine is present on Ser47. The residue at position 85 (Thr85) is a Phosphothreonine. The interval 93–421 is flexible stalk domain; it reads ILLTAPESSI…RHHQFLEPAP (329 aa). 2 disordered regions span residues 256–292 and 333–457; these read HSLPCTPHTGAEDAEQAAGRKTQSSGPGLQKNSPGKP and AEKK…DPHK. Residues 276-288 show a composition bias toward polar residues; the sequence is KTQSSGPGLQKNS. A phosphoserine mark is found at Ser343, Ser345, and Ser356. Basic and acidic residues predominate over residues 357–367; sequence RVEEAEGHTEV. 4 positions are modified to phosphoserine: Ser373, Ser385, Ser386, and Ser397. Residues 395 to 407 show a composition bias toward low complexity; the sequence is AASPESASSTPES.

It belongs to the CENP-T/CNN1 family. In terms of assembly, component of the CENPA-CAD complex, composed of CENPI, CENPK, CENPL, CENPO, CENPP, CENPQ, CENPR and CENPS. The CENPA-CAD complex is probably recruited on centromeres by the CENPA-NAC complex, at least composed of CENPA, CENPC, CENPH, CENPM, CENPN, CENPT and CENPU. Identified in a centromeric complex containing histones H2A, H2B, H3 and H4, and at least CENPA, CENPB, CENPC, CENPT, CENPN, HJURP, SUPT16H, SSRP1 and RSF1. Interacts (via N-terminus) with the NDC80 complex. Heterodimer with CENPW; this dimer coassembles with CENPS-CENPX heterodimers at centromeres to form the tetrameric CENP-T-W-S-X complex. Dynamically phosphorylated at Ser-47 and probably also other sites during the cell cycle. Phosphorylated at Ser-47 during G2 phase, metaphase and anaphase, but not during telophase or G1 phase.

Its subcellular location is the nucleus. It localises to the chromosome. The protein localises to the centromere. The protein resides in the kinetochore. Component of the CENPA-NAC (nucleosome-associated) complex, a complex that plays a central role in assembly of kinetochore proteins, mitotic progression and chromosome segregation. The CENPA-NAC complex recruits the CENPA-CAD (nucleosome distal) complex and may be involved in incorporation of newly synthesized CENPA into centromeres. Part of a nucleosome-associated complex that binds specifically to histone H3-containing nucleosomes at the centromere, as opposed to nucleosomes containing CENPA. Component of the heterotetrameric CENP-T-W-S-X complex that binds and supercoils DNA, and plays an important role in kinetochore assembly. CENPT has a fundamental role in kinetochore assembly and function. It is one of the inner kinetochore proteins, with most further proteins binding downstream. Required for normal chromosome organization and normal progress through mitosis. This chain is Centromere protein T (CENPT), found in Homo sapiens (Human).